The primary structure comprises 318 residues: L-carnitine dehydrogenase (318 aa).

NAD(+) is bound at residue 14 to 19; sequence GAGVIG.

It belongs to the 3-hydroxyacyl-CoA dehydrogenase family. L-carnitine dehydrogenase subfamily. As to quaternary structure, homodimer.

Its subcellular location is the cytoplasm. The enzyme catalyses carnitine + NAD(+) = 3-dehydrocarnitine + NADH + H(+). The protein operates within amine and polyamine metabolism; carnitine metabolism. Its function is as follows. Catalyzes the NAD(+)-dependent oxidation of L-carnitine to 3-dehydrocarnitine. The polypeptide is L-carnitine dehydrogenase (Streptomyces coelicolor (strain ATCC BAA-471 / A3(2) / M145)).